A 178-amino-acid polypeptide reads, in one-letter code: Cytidylate kinase (178 aa).

7–15 (GLPGTGTTT) contacts ATP.

This sequence belongs to the cytidylate kinase family. Type 2 subfamily.

It localises to the cytoplasm. It catalyses the reaction CMP + ATP = CDP + ADP. The enzyme catalyses dCMP + ATP = dCDP + ADP. In Methanocaldococcus jannaschii (strain ATCC 43067 / DSM 2661 / JAL-1 / JCM 10045 / NBRC 100440) (Methanococcus jannaschii), this protein is Cytidylate kinase (cmk).